The sequence spans 612 residues: Zinc metalloproteinase-disintegrin-like berythractivase (612 aa).

A signal peptide spans Met1–Ser20. Positions Ile21–Asn187 are excised as a propeptide. In terms of domain architecture, Peptidase M12B spans Lys200–Pro396. Glu203 contributes to the Ca(2+) binding site. Asn260 carries N-linked (GlcNAc...) asparagine glycosylation. Asp287 provides a ligand contact to Ca(2+). 3 disulfides stabilise this stretch: Cys311/Cys391, Cys351/Cys375, and Cys353/Cys358. His336 lines the Zn(2+) pocket. Glu337 is an active-site residue. Positions 340 and 346 each coordinate Zn(2+). A glycan (N-linked (GlcNAc...) asparagine) is linked at Asn348. N-linked (GlcNAc...) asparagine glycosylation occurs at Asn374. Positions 391, 394, 406, 409, 411, 413, 416, and 419 each coordinate Ca(2+). Residues Pro404 to Asn490 form the Disintegrin domain. Disulfide bonds link Cys407–Cys436, Cys418–Cys431, Cys420–Cys426, Cys430–Cys453, Cys444–Cys450, Cys449–Cys475, Cys462–Cys482, Cys469–Cys501, Cys494–Cys506, Cys513–Cys563, Cys528–Cys574, Cys541–Cys551, Cys558–Cys600, and Cys594–Cys605. Asn432 carries an N-linked (GlcNAc...) asparagine glycan. The D/ECD-tripeptide signature appears at Asp468–Asp470. 4 residues coordinate Ca(2+): Asp470, Leu471, Glu473, and Asp485.

It belongs to the venom metalloproteinase (M12B) family. P-III subfamily. P-IIIa sub-subfamily. In terms of assembly, monomer. Zn(2+) is required as a cofactor. Highly glycosylated. In terms of tissue distribution, expressed by the venom gland.

The protein resides in the secreted. Its activity is regulated as follows. Inhibited by EDTA and o-phenanthroline. Not inhibited by PMSF, benzamidine, irreversible serine-proteinase inhibitors and cysteine proteinase inhibitor E-64. Potent activator of prothrombin (F2). Does not elicit any hemorrhagic response. Barely inhibits collagen-induced platelet aggregation. Binds neither collagen, nor the jararhagin monoclonal antibody MAJar3. Hydrolyzes the Aalpha-chain of fibrin and fibrinogen, without affecting the Bbeta- and gamma-chains. Is capable of triggering endothelial pro-inflammatory and procoagulant cell responses, but fails to trigger apoptosis. Induces von Willebrand factor release, and the expression of both ICAM1 and E-selectin (SELE) (without increase in VCAM1) in endothelial cells (HUVEC). Is also able to up-regulate the synthesis of the coagulation factor TF (F3). Enhances nitric oxide (NO) generation, prostacyclin production and interleukin-8 release. This chain is Zinc metalloproteinase-disintegrin-like berythractivase, found in Bothrops erythromelas (Caatinga lance head).